The chain runs to 360 residues: Phospho-N-acetylmuramoyl-pentapeptide-transferase (360 aa).

The next 10 membrane-spanning stretches (helical) occupy residues 26–46 (AILG…KLIE), 74–94 (MGGL…GDLG), 97–117 (YVWV…IDDY), 132–152 (WKYI…YTTA), 168–188 (VMPQ…VGSS), 199–219 (GLAI…AYLS), 236–256 (SGEL…FLWF), 263–283 (VFMG…IAVL), 288–308 (ILLV…ILQV), and 338–358 (VIVR…ATLK).

This sequence belongs to the glycosyltransferase 4 family. MraY subfamily. Mg(2+) serves as cofactor.

It localises to the cell inner membrane. It catalyses the reaction UDP-N-acetyl-alpha-D-muramoyl-L-alanyl-gamma-D-glutamyl-meso-2,6-diaminopimeloyl-D-alanyl-D-alanine + di-trans,octa-cis-undecaprenyl phosphate = di-trans,octa-cis-undecaprenyl diphospho-N-acetyl-alpha-D-muramoyl-L-alanyl-D-glutamyl-meso-2,6-diaminopimeloyl-D-alanyl-D-alanine + UMP. It functions in the pathway cell wall biogenesis; peptidoglycan biosynthesis. Its function is as follows. Catalyzes the initial step of the lipid cycle reactions in the biosynthesis of the cell wall peptidoglycan: transfers peptidoglycan precursor phospho-MurNAc-pentapeptide from UDP-MurNAc-pentapeptide onto the lipid carrier undecaprenyl phosphate, yielding undecaprenyl-pyrophosphoryl-MurNAc-pentapeptide, known as lipid I. This chain is Phospho-N-acetylmuramoyl-pentapeptide-transferase, found in Shewanella sp. (strain ANA-3).